We begin with the raw amino-acid sequence, 119 residues long: NADH dehydrogenase [ubiquinone] 1 subunit C2 (119 aa).

The helical transmembrane segment at 56–75 (GLHRQLLYITAFFFAGYYLV) threads the bilayer.

Belongs to the complex I NDUFC2 subunit family. Complex I is composed of 45 different subunits. Interacts with TMEM242.

It localises to the mitochondrion inner membrane. Accessory subunit of the mitochondrial membrane respiratory chain NADH dehydrogenase (Complex I), that is believed not to be involved in catalysis but required for the complex assembly. Complex I functions in the transfer of electrons from NADH to the respiratory chain. The immediate electron acceptor for the enzyme is believed to be ubiquinone. This is NADH dehydrogenase [ubiquinone] 1 subunit C2 from Gorilla gorilla gorilla (Western lowland gorilla).